A 61-amino-acid chain; its full sequence is Small ribosomal subunit protein uS14B (61 aa).

Zn(2+) contacts are provided by cysteine 24, cysteine 27, cysteine 40, and cysteine 43.

Belongs to the universal ribosomal protein uS14 family. Zinc-binding uS14 subfamily. Part of the 30S ribosomal subunit. Contacts proteins S3 and S10. Zn(2+) is required as a cofactor.

Binds 16S rRNA, required for the assembly of 30S particles and may also be responsible for determining the conformation of the 16S rRNA at the A site. The chain is Small ribosomal subunit protein uS14B from Kineococcus radiotolerans (strain ATCC BAA-149 / DSM 14245 / SRS30216).